A 417-amino-acid chain; its full sequence is Serine--tRNA ligase (417 aa).

L-serine is bound at residue 226 to 228 (TSE). ATP contacts are provided by residues 257-259 (RRE) and Val273. Position 280 (Glu280) interacts with L-serine. Position 344–347 (344–347 (EVTS)) interacts with ATP. Residue Thr379 participates in L-serine binding.

Belongs to the class-II aminoacyl-tRNA synthetase family. Type-1 seryl-tRNA synthetase subfamily. In terms of assembly, homodimer. The tRNA molecule binds across the dimer.

The protein localises to the cytoplasm. It carries out the reaction tRNA(Ser) + L-serine + ATP = L-seryl-tRNA(Ser) + AMP + diphosphate + H(+). The enzyme catalyses tRNA(Sec) + L-serine + ATP = L-seryl-tRNA(Sec) + AMP + diphosphate + H(+). It participates in aminoacyl-tRNA biosynthesis; selenocysteinyl-tRNA(Sec) biosynthesis; L-seryl-tRNA(Sec) from L-serine and tRNA(Sec): step 1/1. In terms of biological role, catalyzes the attachment of serine to tRNA(Ser). Is also able to aminoacylate tRNA(Sec) with serine, to form the misacylated tRNA L-seryl-tRNA(Sec), which will be further converted into selenocysteinyl-tRNA(Sec). The polypeptide is Serine--tRNA ligase (Tropheryma whipplei (strain TW08/27) (Whipple's bacillus)).